Here is a 494-residue protein sequence, read N- to C-terminus: Glutamyl-tRNA(Gln) amidotransferase subunit A (494 aa).

Catalysis depends on charge relay system residues Lys-88 and Ser-163. Ser-187 functions as the Acyl-ester intermediate in the catalytic mechanism.

Belongs to the amidase family. GatA subfamily. In terms of assembly, heterotrimer of A, B and C subunits.

It carries out the reaction L-glutamyl-tRNA(Gln) + L-glutamine + ATP + H2O = L-glutaminyl-tRNA(Gln) + L-glutamate + ADP + phosphate + H(+). Allows the formation of correctly charged Gln-tRNA(Gln) through the transamidation of misacylated Glu-tRNA(Gln) in organisms which lack glutaminyl-tRNA synthetase. The reaction takes place in the presence of glutamine and ATP through an activated gamma-phospho-Glu-tRNA(Gln). In Corynebacterium diphtheriae (strain ATCC 700971 / NCTC 13129 / Biotype gravis), this protein is Glutamyl-tRNA(Gln) amidotransferase subunit A.